The primary structure comprises 298 residues: MGSNLKEIRKKITSVKNTQKTTKAMKLVSTSKLKKAEEMAKRSRVYAERITAVFQEIKAKIEQNGFSGLESPYFTAGEDREVKMVDIVFVTADKGLCGGFNSTTIKEVTRLMAEYKSQNVKVRLRAIGKKGISFFGFNEVELLDKVSDLSATPDYERAAEFVNKATTDFINGVTDKVILVHNGFKNMISQELKVQDLLPIKADAIEAKESLGMMEVEPSEQEREILDQLAKKYIEFNMYYALIDSLAAEHSARMQAMDAASNNAGELVKSLTIAYNKARQEAITTELVEINTGVESMK.

This sequence belongs to the ATPase gamma chain family. As to quaternary structure, F-type ATPases have 2 components, CF(1) - the catalytic core - and CF(0) - the membrane proton channel. CF(1) has five subunits: alpha(3), beta(3), gamma(1), delta(1), epsilon(1). CF(0) has three main subunits: a, b and c.

The protein resides in the cell inner membrane. In terms of biological role, produces ATP from ADP in the presence of a proton gradient across the membrane. The gamma chain is believed to be important in regulating ATPase activity and the flow of protons through the CF(0) complex. In Wolinella succinogenes (strain ATCC 29543 / DSM 1740 / CCUG 13145 / JCM 31913 / LMG 7466 / NCTC 11488 / FDC 602W) (Vibrio succinogenes), this protein is ATP synthase gamma chain.